A 281-amino-acid polypeptide reads, in one-letter code: Rhomboid protease AarA (281 aa).

Transmembrane regions (helical) follow at residues 16-36 (FSLG…AVYF), 76-96 (MLHS…VIGI), 105-125 (FKLL…SAYW), 145-165 (IGVG…IYLI), 185-205 (QLYN…QSGV), 208-228 (AAHI…ILVP), and 233-253 (VANL…IYLY). Residue S150 is the Nucleophile of the active site. The active-site Charge relay system is the H210.

Belongs to the peptidase S54 family.

The protein resides in the cell membrane. The catalysed reaction is Cleaves type-1 transmembrane domains using a catalytic dyad composed of serine and histidine that are contributed by different transmembrane domains.. Rhomboid serine protease that catalyzes intramembrane proteolysis. Mediates quorum-sensing and the subsequent regulation of target genes via activation of the Tat protein export system. Catalyzes the proteolytic activation of TatA by removal of its N-terminal extension. The protein is Rhomboid protease AarA (aarA) of Providencia stuartii.